The following is a 406-amino-acid chain: Arginine deiminase (406 aa).

Catalysis depends on Cys396, which acts as the Amidino-cysteine intermediate.

Belongs to the arginine deiminase family.

The protein localises to the cytoplasm. It catalyses the reaction L-arginine + H2O = L-citrulline + NH4(+). The protein operates within amino-acid degradation; L-arginine degradation via ADI pathway; carbamoyl phosphate from L-arginine: step 1/2. The polypeptide is Arginine deiminase (Aliivibrio salmonicida (strain LFI1238) (Vibrio salmonicida (strain LFI1238))).